The following is a 397-amino-acid chain: Acetate kinase (397 aa).

Mg(2+) is bound at residue asparagine 8. Residue lysine 15 participates in ATP binding. Arginine 90 lines the substrate pocket. The active-site Proton donor/acceptor is aspartate 147. Residues histidine 207–glycine 211, aspartate 283–arginine 285, and glycine 330–asparagine 334 contribute to the ATP site. Glutamate 383 is a binding site for Mg(2+).

It belongs to the acetokinase family. As to quaternary structure, homodimer. It depends on Mg(2+) as a cofactor. Mn(2+) is required as a cofactor.

It localises to the cytoplasm. It carries out the reaction acetate + ATP = acetyl phosphate + ADP. It participates in metabolic intermediate biosynthesis; acetyl-CoA biosynthesis; acetyl-CoA from acetate: step 1/2. Its function is as follows. Catalyzes the formation of acetyl phosphate from acetate and ATP. Can also catalyze the reverse reaction. In Fructilactobacillus sanfranciscensis (Lactobacillus sanfranciscensis), this protein is Acetate kinase.